A 235-amino-acid polypeptide reads, in one-letter code: Riboflavin kinase (235 aa).

Positions 45 and 47 each coordinate Mg(2+). Catalysis depends on glutamate 140, which acts as the Nucleophile.

The protein belongs to the flavokinase family. Requires Zn(2+) as cofactor. It depends on Mg(2+) as a cofactor.

The enzyme catalyses riboflavin + ATP = FMN + ADP + H(+). It participates in cofactor biosynthesis; FMN biosynthesis; FMN from riboflavin (ATP route): step 1/1. In terms of biological role, catalyzes the phosphorylation of riboflavin (vitamin B2) to form flavin mononucleotide (FMN) coenzyme. The polypeptide is Riboflavin kinase (FMN1) (Chaetomium globosum (strain ATCC 6205 / CBS 148.51 / DSM 1962 / NBRC 6347 / NRRL 1970) (Soil fungus)).